Here is a 542-residue protein sequence, read N- to C-terminus: CTP synthase (542 aa).

The interval 1 to 265 (MARYVFITGG…DSEILSAFGI (265 aa)) is amidoligase domain. Ser-13 provides a ligand contact to CTP. A UTP-binding site is contributed by Ser-13. 14–19 (SLGKGI) serves as a coordination point for ATP. An L-glutamine-binding site is contributed by Tyr-54. Residue Asp-71 coordinates ATP. The Mg(2+) site is built by Asp-71 and Glu-139. Residues 146–148 (DIE), 186–191 (KTKPTQ), and Lys-222 contribute to the CTP site. UTP contacts are provided by residues 186–191 (KTKPTQ) and Lys-222. The 251-residue stretch at 291–541 (TIAIVGKYTG…IAATVEQSRL (251 aa)) folds into the Glutamine amidotransferase type-1 domain. Ala-353 serves as a coordination point for L-glutamine. The active-site Nucleophile; for glutamine hydrolysis is the Cys-380. Residues 381–384 (FGMQ), Glu-404, and Arg-469 contribute to the L-glutamine site. Catalysis depends on residues His-514 and Glu-516.

Belongs to the CTP synthase family. As to quaternary structure, homotetramer.

The enzyme catalyses UTP + L-glutamine + ATP + H2O = CTP + L-glutamate + ADP + phosphate + 2 H(+). The catalysed reaction is L-glutamine + H2O = L-glutamate + NH4(+). It catalyses the reaction UTP + NH4(+) + ATP = CTP + ADP + phosphate + 2 H(+). It functions in the pathway pyrimidine metabolism; CTP biosynthesis via de novo pathway; CTP from UDP: step 2/2. Its activity is regulated as follows. Allosterically activated by GTP, when glutamine is the substrate; GTP has no effect on the reaction when ammonia is the substrate. The allosteric effector GTP functions by stabilizing the protein conformation that binds the tetrahedral intermediate(s) formed during glutamine hydrolysis. Inhibited by the product CTP, via allosteric rather than competitive inhibition. In terms of biological role, catalyzes the ATP-dependent amination of UTP to CTP with either L-glutamine or ammonia as the source of nitrogen. Regulates intracellular CTP levels through interactions with the four ribonucleotide triphosphates. The sequence is that of CTP synthase from Bartonella bacilliformis (strain ATCC 35685 / KC583 / Herrer 020/F12,63).